Reading from the N-terminus, the 171-residue chain is S-ribosylhomocysteine lyase (171 aa).

Fe cation-binding residues include H54, H58, and C128.

Belongs to the LuxS family. Homodimer. It depends on Fe cation as a cofactor.

It catalyses the reaction S-(5-deoxy-D-ribos-5-yl)-L-homocysteine = (S)-4,5-dihydroxypentane-2,3-dione + L-homocysteine. Functionally, involved in the synthesis of autoinducer 2 (AI-2) which is secreted by bacteria and is used to communicate both the cell density and the metabolic potential of the environment. The regulation of gene expression in response to changes in cell density is called quorum sensing. Catalyzes the transformation of S-ribosylhomocysteine (RHC) to homocysteine (HC) and 4,5-dihydroxy-2,3-pentadione (DPD). The sequence is that of S-ribosylhomocysteine lyase from Pectobacterium carotovorum subsp. carotovorum (strain PC1).